Reading from the N-terminus, the 347-residue chain is MERARRRGGGGGRGRGGKNVGGSGLSKSRLYPQAQHSHYPHYAASATPNQAGGAAEIQELASKRVDIQKKRFYLDVKQSSRGRFLKIAEVWIGRGRQDNIRKSKLTLSLSVAAELKDCLGDFIEHYAHLGLKGHRQEHGHSKEQGSRRRQKHSAPSPPVSVGSEEHPHSVLKTDYIERDNRKYYLDLKENQRGRFLRIRQTMMRGTGMIGYFGHSLGQEQTIVLPAQGMIEFRDALVQLIEDYGEGDIEERRGGDDDPLELPEGTSFRVDNKRFYFDVGSNKYGIFLKVSEVRPPYRNTITVPFKAWTRFGENFIKYEEEMRKICNSHKEKRMDGRKASGEEQECLD.

Disordered regions lie at residues 1 to 34 and 133 to 169; these read MERA…YPQA and GHRQ…HPHS. The span at 9 to 24 shows a compositional bias: gly residues; the sequence is GGGGRGRGGKNVGGSG. Residues 51 to 293 mediate DNA binding; that stretch reads AGGAAEIQEL…GIFLKVSEVR (243 aa). Basic and acidic residues predominate over residues 134–146; sequence HRQEHGHSKEQGS. Residues Ser-160, Ser-163, and Ser-339 each carry the phosphoserine modification.

Belongs to the PUR DNA-binding protein family. In terms of tissue distribution, isoform 1 is expressed in testis and glioblastoma. Isoform 2 is expressed in fetal lung.

It is found in the nucleus. This is Purine-rich element-binding protein gamma (PURG) from Homo sapiens (Human).